The chain runs to 306 residues: D-alanine--D-alanine ligase (306 aa).

Positions 101-301 (KKILAHAGLP…FPDLVEHLVR (201 aa)) constitute an ATP-grasp domain. 129–185 (VAELGLPVVVKAPTQGSSIGVYIVEREEDLEARITDAVAYGGTRVLVEKFIAGPELT) is an ATP binding site. Mg(2+) contacts are provided by aspartate 256, glutamate 268, and asparagine 270.

Belongs to the D-alanine--D-alanine ligase family. Mg(2+) is required as a cofactor. It depends on Mn(2+) as a cofactor.

It is found in the cytoplasm. It catalyses the reaction 2 D-alanine + ATP = D-alanyl-D-alanine + ADP + phosphate + H(+). It functions in the pathway cell wall biogenesis; peptidoglycan biosynthesis. Its function is as follows. Cell wall formation. This Desulforudis audaxviator (strain MP104C) protein is D-alanine--D-alanine ligase.